The following is a 484-amino-acid chain: UDP-N-acetylmuramate--L-alanine ligase (484 aa).

Glycine 125 to threonine 131 contributes to the ATP binding site.

The protein belongs to the MurCDEF family.

Its subcellular location is the cytoplasm. The catalysed reaction is UDP-N-acetyl-alpha-D-muramate + L-alanine + ATP = UDP-N-acetyl-alpha-D-muramoyl-L-alanine + ADP + phosphate + H(+). It functions in the pathway cell wall biogenesis; peptidoglycan biosynthesis. Functionally, cell wall formation. The protein is UDP-N-acetylmuramate--L-alanine ligase of Buchnera aphidicola subsp. Acyrthosiphon pisum (strain Tuc7).